Reading from the N-terminus, the 282-residue chain is Undecaprenyl-diphosphatase (282 aa).

Transmembrane regions (helical) follow at residues 7-29 (VLFA…HVVI), 45-65 (FLPF…LYFW), 89-109 (GLLL…FALK), 115-135 (LFAS…VLII), 153-173 (LTLR…LPGL), 196-216 (FAFL…VPHL), 229-249 (TALL…AFLM), and 258-278 (WALG…LILI).

It belongs to the UppP family.

It localises to the cell inner membrane. The enzyme catalyses di-trans,octa-cis-undecaprenyl diphosphate + H2O = di-trans,octa-cis-undecaprenyl phosphate + phosphate + H(+). Functionally, catalyzes the dephosphorylation of undecaprenyl diphosphate (UPP). Confers resistance to bacitracin. This Acidiphilium cryptum (strain JF-5) protein is Undecaprenyl-diphosphatase.